Reading from the N-terminus, the 97-residue chain is Large ribosomal subunit protein uL23 (97 aa).

It belongs to the universal ribosomal protein uL23 family. In terms of assembly, part of the 50S ribosomal subunit. Contacts protein L29, and trigger factor when it is bound to the ribosome.

Its function is as follows. One of the early assembly proteins it binds 23S rRNA. One of the proteins that surrounds the polypeptide exit tunnel on the outside of the ribosome. Forms the main docking site for trigger factor binding to the ribosome. This is Large ribosomal subunit protein uL23 from Anaeromyxobacter dehalogenans (strain 2CP-C).